A 395-amino-acid polypeptide reads, in one-letter code: ATP synthase subunit a (395 aa).

A run of 5 helical transmembrane segments spans residues 153-173, 246-266, 273-293, 313-333, and 339-359; these read FTNP…LVYF, HFLI…IVGF, FLSF…LVLL, MMAG…MLCM, and FIGD…ELGV.

This sequence belongs to the ATPase A chain family. As to quaternary structure, F-type ATPases have 2 components, CF(1) - the catalytic core - and CF(0) - the membrane proton channel. CF(1) has five subunits: alpha(3), beta(3), gamma(1), delta(1), epsilon(1). CF(0) has three main subunits: a, b and c.

The protein localises to the mitochondrion inner membrane. Its function is as follows. Mitochondrial membrane ATP synthase (F(1)F(0) ATP synthase or Complex V) produces ATP from ADP in the presence of a proton gradient across the membrane which is generated by electron transport complexes of the respiratory chain. F-type ATPases consist of two structural domains, F(1) - containing the extramembraneous catalytic core and F(0) - containing the membrane proton channel, linked together by a central stalk and a peripheral stalk. During catalysis, ATP synthesis in the catalytic domain of F(1) is coupled via a rotary mechanism of the central stalk subunits to proton translocation. Key component of the proton channel; it may play a direct role in the translocation of protons across the membrane. In Nicotiana tabacum (Common tobacco), this protein is ATP synthase subunit a (ATP6).